Reading from the N-terminus, the 43-residue chain is LICYVSRDGKTATCPPQGKCEKYAVSASHTXHXFYVYGCTSXC.

2 cysteine pairs are disulfide-bonded: C3–C20 and C14–C39.

Expressed by the venom gland.

It is found in the secreted. Neurotoxin. Blocks muscular nicotinic acetylcholine receptors (nAChR). This Micrurus pyrrhocryptus (Coral snake) protein is Venom protein E2.